Reading from the N-terminus, the 157-residue chain is Cell cycle control protein 50C (157 aa).

Over 1-34 (MEERAQHCLSRLLDNSALKQQELPIHRLYFTARR) the chain is Cytoplasmic. The helical transmembrane segment at 35–55 (VLFVFFATGIFCLCMGIILIL) threads the bilayer. Residues 56–157 (SARSTQEIEI…LFLNQVDFSV (102 aa)) lie on the Extracellular side of the membrane. N-linked (GlcNAc...) asparagine glycosylation is present at Asn66.

The protein belongs to the CDC50/LEM3 family.

The protein resides in the membrane. This Pan troglodytes (Chimpanzee) protein is Cell cycle control protein 50C (TMEM30C).